Reading from the N-terminus, the 195-residue chain is dITP/XTP pyrophosphatase (195 aa).

Residue 9 to 14 (TGNKGK) coordinates substrate. 2 residues coordinate Mg(2+): E41 and D70. D70 functions as the Proton acceptor in the catalytic mechanism. Substrate contacts are provided by residues S71, 155 to 158 (FGYD), K178, and 183 to 184 (HR).

The protein belongs to the HAM1 NTPase family. Homodimer. Mg(2+) is required as a cofactor.

It catalyses the reaction XTP + H2O = XMP + diphosphate + H(+). The catalysed reaction is dITP + H2O = dIMP + diphosphate + H(+). The enzyme catalyses ITP + H2O = IMP + diphosphate + H(+). Its function is as follows. Pyrophosphatase that catalyzes the hydrolysis of nucleoside triphosphates to their monophosphate derivatives, with a high preference for the non-canonical purine nucleotides XTP (xanthosine triphosphate), dITP (deoxyinosine triphosphate) and ITP. Seems to function as a house-cleaning enzyme that removes non-canonical purine nucleotides from the nucleotide pool, thus preventing their incorporation into DNA/RNA and avoiding chromosomal lesions. This Haemophilus influenzae (strain ATCC 51907 / DSM 11121 / KW20 / Rd) protein is dITP/XTP pyrophosphatase.